The following is a 476-amino-acid chain: Glycogen synthase (476 aa).

K15 is an ADP-alpha-D-glucose binding site.

This sequence belongs to the glycosyltransferase 1 family. Bacterial/plant glycogen synthase subfamily.

The catalysed reaction is [(1-&gt;4)-alpha-D-glucosyl](n) + ADP-alpha-D-glucose = [(1-&gt;4)-alpha-D-glucosyl](n+1) + ADP + H(+). It functions in the pathway glycan biosynthesis; glycogen biosynthesis. Functionally, synthesizes alpha-1,4-glucan chains using ADP-glucose. The chain is Glycogen synthase from Streptococcus agalactiae serotype Ia (strain ATCC 27591 / A909 / CDC SS700).